A 124-amino-acid chain; its full sequence is UPF0102 protein PP_1324 (124 aa).

It belongs to the UPF0102 family.

The polypeptide is UPF0102 protein PP_1324 (Pseudomonas putida (strain ATCC 47054 / DSM 6125 / CFBP 8728 / NCIMB 11950 / KT2440)).